Reading from the N-terminus, the 315-residue chain is Ester hydrolase C11orf54 homolog (315 aa).

Zn(2+)-binding residues include His266, His268, and His278.

Monomer. Zn(2+) is required as a cofactor.

The protein resides in the nucleus. The protein localises to the cytoplasm. Functionally, exhibits ester hydrolase activity on the substrate p-nitrophenyl acetate, in vitro. Regulates DNA damage and repair by regulating HIF1A degradation via chaperone-mediated autophagy (CMA). The chain is Ester hydrolase C11orf54 homolog from Rattus norvegicus (Rat).